Reading from the N-terminus, the 395-residue chain is Protein hedgehog (395 aa).

Residues 1–26 (MDNHSSVPWASAASVTCLSLDAKCHS) form the signal peptide. The span at 26 to 43 (SSSSSCSSKSTASSISAS) shows a compositional bias: low complexity. The tract at residues 26–46 (SSSSSCSSKSTASSISASPET) is disordered. Residues 27 to 82 (SSSSCSSKSTASSISASPETQTMRHIAHTQRCLSRLTSLVALLLIVLPMMFSPAHS) constitute a propeptide that is removed on maturation. Residue Cys83 is the site of N-palmitoyl cysteine attachment. Ca(2+) contacts are provided by Glu147, Glu148, Asp153, Thr183, Glu184, Asp187, and Asp189. A lipid anchor (Cholesterol glycine ester) is attached at Gly255.

Belongs to the hedgehog family. In terms of assembly, interacts with shf. The C-terminal part of the hedgehog protein precursor displays an autoproteolysis activity that results in the cleavage of the full-length protein into two parts (N-product and C-product). In addition, the C-terminal part displays a cholesterol transferase activity that results by the covalent attachment of a cholesterol moiety to the C-terminal of the newly generated N-product. The N-product is the active species in both local and long-range signaling, whereas the C-product has no signaling activity. In terms of processing, cholesterylation is required for N-product targeting to lipid rafts and multimerization. Post-translationally, N-palmitoylation by Rasp of the hedgehog N-product, within the secretory pathway, is required for the embryonic and larval patterning activities of the hedgehog signal.

The protein localises to the nucleus. It localises to the cytoplasm. Its subcellular location is the cell membrane. The catalysed reaction is glycyl-L-cysteinyl-[protein] + cholesterol + H(+) = [protein]-C-terminal glycyl cholesterol ester + N-terminal L-cysteinyl-[protein]. In terms of biological role, the C-terminal part of the hedgehog protein precursor displays an autoproteolysis activity that results in the cleavage of the full-length protein into two parts (N-product and C-product). In addition, the C-terminal part displays a cholesterol transferase activity that results by the covalent attachment of a cholesterol moiety to the C-terminal of the newly generated N-product. Once cleaved, the C-product has no signaling activity and diffuses from the cell. The dually lipidated hedgehog protein N-product is a morphogen which is essential for a variety of patterning events during development. Establishes the anterior-posterior axis of the embryonic segments and patterns the larval imaginal disks. Binds to the patched (ptc) receptor, which functions in association with smoothened (smo), to activate the transcription of target genes wingless (wg), decapentaplegic (dpp) and ptc. In the absence of hh, ptc represses the constitutive signaling activity of smo through fused (fu). Essential component of a signaling pathway which regulates the Duox-dependent gut immune response to bacterial uracil; required to activate Cad99C-dependent endosome formation, norpA-dependent Ca2+ mobilization and p38 MAPK, which are essential steps in the Duox-dependent production of reactive oxygen species (ROS) in response to intestinal bacterial infection. During photoreceptor differentiation, it up-regulates transcription of Ubr3, which in turn promotes the hh-signaling pathway by mediating the ubiquitination and degradation of cos. The protein is Protein hedgehog of Drosophila simulans (Fruit fly).